Consider the following 253-residue polypeptide: 3-deoxy-manno-octulosonate cytidylyltransferase (253 aa).

It belongs to the KdsB family.

It localises to the cytoplasm. The catalysed reaction is 3-deoxy-alpha-D-manno-oct-2-ulosonate + CTP = CMP-3-deoxy-beta-D-manno-octulosonate + diphosphate. Its pathway is nucleotide-sugar biosynthesis; CMP-3-deoxy-D-manno-octulosonate biosynthesis; CMP-3-deoxy-D-manno-octulosonate from 3-deoxy-D-manno-octulosonate and CTP: step 1/1. The protein operates within bacterial outer membrane biogenesis; lipopolysaccharide biosynthesis. Its function is as follows. Activates KDO (a required 8-carbon sugar) for incorporation into bacterial lipopolysaccharide in Gram-negative bacteria. This Neisseria meningitidis serogroup C / serotype 2a (strain ATCC 700532 / DSM 15464 / FAM18) protein is 3-deoxy-manno-octulosonate cytidylyltransferase.